Consider the following 257-residue polypeptide: 14-3-3-like protein GF14-G (257 aa).

The protein belongs to the 14-3-3 family.

Functionally, is associated with a DNA binding complex that binds to the G box, a well-characterized cis-acting DNA regulatory element found in plant genes. This chain is 14-3-3-like protein GF14-G (GF14G), found in Oryza sativa subsp. japonica (Rice).